We begin with the raw amino-acid sequence, 122 residues long: Large ribosomal subunit protein uL14 (122 aa).

This sequence belongs to the universal ribosomal protein uL14 family. In terms of assembly, part of the 50S ribosomal subunit. Forms a cluster with proteins L3 and L19. In the 70S ribosome, L14 and L19 interact and together make contacts with the 16S rRNA in bridges B5 and B8.

Its function is as follows. Binds to 23S rRNA. Forms part of two intersubunit bridges in the 70S ribosome. The protein is Large ribosomal subunit protein uL14 of Chromobacterium violaceum (strain ATCC 12472 / DSM 30191 / JCM 1249 / CCUG 213 / NBRC 12614 / NCIMB 9131 / NCTC 9757 / MK).